Reading from the N-terminus, the 296-residue chain is Thiamine-monophosphate kinase (296 aa).

Residues Asp32, Thr46, and Asp48 each coordinate Mg(2+). Asp55 is a binding site for substrate. Residues Asp76 and Asp121 each coordinate Mg(2+). Residues Gly120–Asp121 and Arg144 contribute to the ATP site. Asp206 is a Mg(2+) binding site. Ser208 is an ATP binding site. Residue Asp209 coordinates Mg(2+). Tyr293 serves as a coordination point for substrate.

Belongs to the thiamine-monophosphate kinase family.

The catalysed reaction is thiamine phosphate + ATP = thiamine diphosphate + ADP. It functions in the pathway cofactor biosynthesis; thiamine diphosphate biosynthesis; thiamine diphosphate from thiamine phosphate: step 1/1. Catalyzes the ATP-dependent phosphorylation of thiamine-monophosphate (TMP) to form thiamine-pyrophosphate (TPP), the active form of vitamin B1. This is Thiamine-monophosphate kinase from Archaeoglobus fulgidus (strain ATCC 49558 / DSM 4304 / JCM 9628 / NBRC 100126 / VC-16).